We begin with the raw amino-acid sequence, 337 residues long: tRNA-dihydrouridine synthase B (337 aa).

FMN-binding positions include 19-21 (PMA) and Gln73. Catalysis depends on Cys103, which acts as the Proton donor. FMN contacts are provided by residues Lys142, 203–205 (NGD), and 227–228 (GR).

This sequence belongs to the Dus family. DusB subfamily. FMN serves as cofactor.

The enzyme catalyses a 5,6-dihydrouridine in tRNA + NAD(+) = a uridine in tRNA + NADH + H(+). The catalysed reaction is a 5,6-dihydrouridine in tRNA + NADP(+) = a uridine in tRNA + NADPH + H(+). In terms of biological role, catalyzes the synthesis of 5,6-dihydrouridine (D), a modified base found in the D-loop of most tRNAs, via the reduction of the C5-C6 double bond in target uridines. The chain is tRNA-dihydrouridine synthase B from Pseudomonas syringae pv. tomato (strain ATCC BAA-871 / DC3000).